We begin with the raw amino-acid sequence, 459 residues long: MDFDTITSISTPMGEGAIGIVRLSGPQAVEIGDKLYKGKKKLEDVDSHTINYGHIVDPETNEVVEEVMISVLRAPRTFTREDIIEINCHGGILTINRILELTMTHGARMAEPGEYTKRAFLNGRIDLSQAEAVMDFIRSKTDRASKVAMNQIEGRLSDLIKRQRQSILEILAQVEVNIDYPEYDDVEDATTEFLLEQSKKIKNEINLLLETGAQGKIMREGLSTVIVGKPNVGKSSMLNNLIQDNKAIVTEVAGTTRDVLEEYVNVRGVPLRLVDTAGIRDTEDIVEKIGVERSRKALSEADLILFVLNNNEPLTQEDRTLYEVIKNEDAIVIVNKTDLEQNLDINEVKEMIGDTPLIQTSMLKQEGIDQLELQIRDLFFGGDVQNQDMTYVSNSRHISLLKQARNAIQDAIDAAESGIPMDMVQIDLTRTWELLGEIIGESASDELIDQLFSQFCLGK.

Residues Arg-22, Glu-85, and Arg-124 each contribute to the (6S)-5-formyl-5,6,7,8-tetrahydrofolate site. The region spanning 221 to 380 is the TrmE-type G domain; sequence GLSTVIVGKP…LELQIRDLFF (160 aa). Asn-231 serves as a coordination point for K(+). GTP-binding positions include 231-236, 250-256, and 275-278; these read NVGKSS, TEVAGTT, and DTAG. Ser-235 provides a ligand contact to Mg(2+). The K(+) site is built by Thr-250, Val-252, and Thr-255. Thr-256 provides a ligand contact to Mg(2+). Position 459 (Lys-459) interacts with (6S)-5-formyl-5,6,7,8-tetrahydrofolate.

It belongs to the TRAFAC class TrmE-Era-EngA-EngB-Septin-like GTPase superfamily. TrmE GTPase family. As to quaternary structure, homodimer. Heterotetramer of two MnmE and two MnmG subunits. Requires K(+) as cofactor.

The protein localises to the cytoplasm. Exhibits a very high intrinsic GTPase hydrolysis rate. Involved in the addition of a carboxymethylaminomethyl (cmnm) group at the wobble position (U34) of certain tRNAs, forming tRNA-cmnm(5)s(2)U34. The chain is tRNA modification GTPase MnmE from Staphylococcus haemolyticus (strain JCSC1435).